An 837-amino-acid chain; its full sequence is Protein kintoun (837 aa).

Disordered stretches follow at residues 100-119 (APSS…GSHW), 205-224 (LPGV…LPDF), 230-249 (YPAA…LQPA), and 363-515 (AAAP…GPGT). A compositionally biased stretch (pro residues) spans 233–242 (APGPRAPSPP). Positions 428 to 442 (GEERVPKPGEQDLSR) are enriched in basic and acidic residues. Low complexity predominate over residues 445 to 459 (GSPPGSVEEPSPGGE). S461 and S467 each carry phosphoserine. Residues 484 to 498 (ESARGDSSVETREES) are compositionally biased toward basic and acidic residues. S640, S641, and S773 each carry phosphoserine.

The protein belongs to the PIH1 family. Kintoun subfamily. Interacts with CFAP300. Interacts with DNAAF4. Interacts with DNAAF6/PIH1D3. Interacts with DNAI2 and HSPA1A.

The protein localises to the cytoplasm. It localises to the dynein axonemal particle. Its function is as follows. Required for cytoplasmic pre-assembly of axonemal dyneins, thereby playing a central role in motility in cilia and flagella. Involved in pre-assembly of dynein arm complexes in the cytoplasm before intraflagellar transport loads them for the ciliary compartment. The protein is Protein kintoun of Homo sapiens (Human).